A 372-amino-acid chain; its full sequence is Putative aminopeptidase SgcX (372 aa).

Residues H67 and D180 each coordinate a divalent metal cation. Residue E212 is the Proton acceptor of the active site. 3 residues coordinate a divalent metal cation: E213, D235, and H329.

It belongs to the peptidase M42 family. The cofactor is a divalent metal cation.

The protein is Putative aminopeptidase SgcX (sgcX) of Salmonella typhi.